We begin with the raw amino-acid sequence, 335 residues long: Magnesium-protoporphyrin IX monomethyl ester [oxidative] cyclase (335 aa).

The protein belongs to the AcsF family. The cofactor is Fe cation.

It is found in the plastid. The protein localises to the chloroplast. The enzyme catalyses Mg-protoporphyrin IX 13-monomethyl ester + 3 NADPH + 3 O2 + 2 H(+) = 3,8-divinyl protochlorophyllide a + 3 NADP(+) + 5 H2O. The protein operates within porphyrin-containing compound metabolism; chlorophyll biosynthesis (light-independent). Catalyzes the formation of the isocyclic ring in chlorophyll biosynthesis. Mediates the cyclase reaction, which results in the formation of divinylprotochlorophyllide (Pchlide) characteristic of all chlorophylls from magnesium-protoporphyrin IX 13-monomethyl ester (MgPMME). The polypeptide is Magnesium-protoporphyrin IX monomethyl ester [oxidative] cyclase (Cyanidioschyzon merolae (strain NIES-3377 / 10D) (Unicellular red alga)).